A 293-amino-acid polypeptide reads, in one-letter code: ATP synthase gamma chain (293 aa).

The protein belongs to the ATPase gamma chain family. In terms of assembly, F-type ATPases have 2 components, CF(1) - the catalytic core - and CF(0) - the membrane proton channel. CF(1) has five subunits: alpha(3), beta(3), gamma(1), delta(1), epsilon(1). CF(0) has three main subunits: a, b and c.

The protein resides in the cell membrane. In terms of biological role, produces ATP from ADP in the presence of a proton gradient across the membrane. The gamma chain is believed to be important in regulating ATPase activity and the flow of protons through the CF(0) complex. In Streptococcus agalactiae serotype III (strain NEM316), this protein is ATP synthase gamma chain.